Reading from the N-terminus, the 227-residue chain is 7-cyano-7-deazaguanine synthase (227 aa).

Residue 9–19 (LSGGLDSATVL) participates in ATP binding. Cys189, Cys199, Cys202, and Cys205 together coordinate Zn(2+).

This sequence belongs to the QueC family. Zn(2+) serves as cofactor.

It carries out the reaction 7-carboxy-7-deazaguanine + NH4(+) + ATP = 7-cyano-7-deazaguanine + ADP + phosphate + H2O + H(+). The protein operates within purine metabolism; 7-cyano-7-deazaguanine biosynthesis. Functionally, catalyzes the ATP-dependent conversion of 7-carboxy-7-deazaguanine (CDG) to 7-cyano-7-deazaguanine (preQ(0)). In Cupriavidus necator (strain ATCC 17699 / DSM 428 / KCTC 22496 / NCIMB 10442 / H16 / Stanier 337) (Ralstonia eutropha), this protein is 7-cyano-7-deazaguanine synthase.